Reading from the N-terminus, the 434-residue chain is MEEINKYIQNSSETGGEIYNLIEELFPICRSITGNGVRKTMDIIRKHIPLEIHEVKSGTKVFDWTVPKEWNIKDAYVRNSKGEKVIDFKENNLHVMSYSVPVHKTMTLDELKPYLHTIPGNKDRIPYLTSYYKENWGFSLTQNKFDELCDDDYEVVIDSSLEDGSLTYGEYYIRGELEEEILLTTYTCHPSMCNDNLSGVALITFIAKALSKLKTKYSYRFLFAPETIGSITWLSRNEDKLKNIKMGLVATCVGDAGIKNYKRTKFGDAEIDKIVEKVLMHCGSEYYVADFFPWGSDERQFSSPGINLPVGSLMRSCYGFDGYHTSADNLCYMNKDGLADSYKTYLEVIYTIENNRTYLNLNPKCEPQLGKRGIYRMIGGGSDYPFDEFAMFWVLNMSDGKNSLLDIAYKSGMEFRRIKYAADALYRVELLKLV.

2 aminopeptidase-like regions span residues 1–55 (MEEI…IHEV) and 57–355 (SGTK…IENN). Residues 56–164 (KSGTKVFDWT…VVIDSSLEDG (109 aa)) are insert. Zn(2+) is bound by residues His-189, Asp-195, and His-324. The permutated winged helix-turn-helix stretch occupies residues 356–434 (RTYLNLNPKC…LYRVELLKLV (79 aa)).

The protein belongs to the UPF0770 family. As to quaternary structure, homotrimer. Requires Zn(2+) as cofactor.

Its function is as follows. The genomic context suggests a role in the biosynthesis of modified polysaccharides; this association with genes involved in carbohydrate metabolism is observed in several phylogenetically distinct taxa. Is not expected to have peptidase activity despite low similarity to aminopeptidases. The polypeptide is Putative polysaccharide biosynthesis protein with aminopeptidase-like domain (Clostridium acetobutylicum (strain ATCC 824 / DSM 792 / JCM 1419 / IAM 19013 / LMG 5710 / NBRC 13948 / NRRL B-527 / VKM B-1787 / 2291 / W)).